The following is a 292-amino-acid chain: MQSSNELIEIKDKLWNGSINVRILMGDDNIKDPKEFLITVYRNSYFPIYFPSVITYFQKYNEKIKYMPVWLEYETVPIKWNLPIGVLYDLLHLSSIVQNREDSSWTLTLRFSDDYPTDQVIPFTYTDVDNSVNYNKSLKEVVVNQLKQSCFVINGNSKPIMNLSEKDSDELWNSIRIHNLKSFNQINKKIIPIQKKFQKLPVKIYIPGSATIIHAPIYPYSDSGEAVLLRDILEEYLPDLMSSNNETLGSIYIHGINVETIINKDIIDVWELFKHLDNFLYIIVLFSTYSTI.

Residue Lys147 forms a Glycyl lysine isopeptide (Lys-Gly) (interchain with G-Cter in ATG12) linkage.

It belongs to the ATG5 family. As to quaternary structure, conjugated with ATG12. Post-translationally, conjugated to ATG12; which is essential for autophagy.

The protein resides in the preautophagosomal structure membrane. In terms of biological role, involved in cytoplasm to vacuole transport (Cvt) and autophagic vesicle formation. Autophagy is essential for maintenance of amino acid levels and protein synthesis under nitrogen starvation. Required for selective autophagic degradation of the nucleus (nucleophagy). Also required for mitophagy, which eliminates defective or superfluous mitochondria in order to fulfill cellular energy requirements and prevent excess ROS production. Conjugation with ATG12, through a ubiquitin-like conjugating system involving ATG7 as an E1-like activating enzyme and ATG10 as an E2-like conjugating enzyme, is essential for its function. The ATG12-ATG5 conjugate acts as an E3-like enzyme which is required for lipidation of ATG8 and ATG8 association to the vesicle membranes. This is Autophagy protein 5 (ATG5) from Debaryomyces hansenii (strain ATCC 36239 / CBS 767 / BCRC 21394 / JCM 1990 / NBRC 0083 / IGC 2968) (Yeast).